Reading from the N-terminus, the 262-residue chain is 5'-nucleotidase SurE (262 aa).

A divalent metal cation contacts are provided by aspartate 8, aspartate 9, serine 41, and asparagine 97.

Belongs to the SurE nucleotidase family. It depends on a divalent metal cation as a cofactor.

The protein resides in the cytoplasm. The enzyme catalyses a ribonucleoside 5'-phosphate + H2O = a ribonucleoside + phosphate. Nucleotidase that shows phosphatase activity on nucleoside 5'-monophosphates. This Methanococcus maripaludis (strain DSM 14266 / JCM 13030 / NBRC 101832 / S2 / LL) protein is 5'-nucleotidase SurE.